Here is a 194-residue protein sequence, read N- to C-terminus: Protein GrpE (194 aa).

Positions 1-14 (MENTQENPTSQNPT) are enriched in polar residues. The tract at residues 1–50 (MENTQENPTSQNPTPADETARQAAEAAAPQQEAAANAATDSPVNAEQSAL) is disordered. The segment covering 21-38 (RQAAEAAAPQQEAAANAA) has biased composition (low complexity).

It belongs to the GrpE family. Homodimer.

The protein resides in the cytoplasm. Functionally, participates actively in the response to hyperosmotic and heat shock by preventing the aggregation of stress-denatured proteins, in association with DnaK and GrpE. It is the nucleotide exchange factor for DnaK and may function as a thermosensor. Unfolded proteins bind initially to DnaJ; upon interaction with the DnaJ-bound protein, DnaK hydrolyzes its bound ATP, resulting in the formation of a stable complex. GrpE releases ADP from DnaK; ATP binding to DnaK triggers the release of the substrate protein, thus completing the reaction cycle. Several rounds of ATP-dependent interactions between DnaJ, DnaK and GrpE are required for fully efficient folding. The protein is Protein GrpE of Paraburkholderia phytofirmans (strain DSM 17436 / LMG 22146 / PsJN) (Burkholderia phytofirmans).